The following is a 469-amino-acid chain: Signal recognition particle 54 kDa protein (469 aa).

Residues 104-111, 184-188, and 242-245 each bind GTP; these read GLYGSGKT, DTAGR, and TKLD. 2 disordered regions span residues 388–410 and 447–469; these read ELENPRVVGQSRTKRICRGSGKP and QQGGGGGGGMGGMGGGGMGPFGD. The segment covering 448 to 469 has biased composition (gly residues); that stretch reads QGGGGGGGMGGMGGGGMGPFGD.

This sequence belongs to the GTP-binding SRP family. SRP54 subfamily. As to quaternary structure, part of the signal recognition particle protein translocation system, which is composed of SRP and FtsY. Archaeal SRP consists of a 7S RNA molecule of 300 nucleotides and two protein subunits: SRP54 and SRP19.

The protein resides in the cytoplasm. It catalyses the reaction GTP + H2O = GDP + phosphate + H(+). Functionally, involved in targeting and insertion of nascent membrane proteins into the cytoplasmic membrane. Binds to the hydrophobic signal sequence of the ribosome-nascent chain (RNC) as it emerges from the ribosomes. The SRP-RNC complex is then targeted to the cytoplasmic membrane where it interacts with the SRP receptor FtsY. This chain is Signal recognition particle 54 kDa protein, found in Haloarcula marismortui (strain ATCC 43049 / DSM 3752 / JCM 8966 / VKM B-1809) (Halobacterium marismortui).